The primary structure comprises 310 residues: AMMECR1-like protein (310 aa).

The interval 26 to 95 (LSGSGTHSHG…LSPLPRPNGT (70 aa)) is disordered. Residues 28 to 66 (GSGTHSHGNQSTTVPGSSSGPLQNHQHVDSSSGRENVSD) are compositionally biased toward polar residues. Residue Ser74 is modified to Phosphoserine. The 195-residue stretch at 97–291 (NTTKNLVVTA…ISYAEYIASR (195 aa)) folds into the AMMECR1 domain.

In Homo sapiens (Human), this protein is AMMECR1-like protein (AMMECR1L).